We begin with the raw amino-acid sequence, 475 residues long: Legumain (475 aa).

An N-terminal signal peptide occupies residues 1-15 (MVMMLVMLSLHGTAA). Residues 16–35 (RLNRREWDSVIQLPTEPVDD) constitute a propeptide that is removed on maturation. The active site involves His158. Cys200 functions as the Nucleophile in the catalytic mechanism. Cys233 and Cys247 are disulfide-bonded. Residue Asn300 is glycosylated (N-linked (GlcNAc...) asparagine). 2 disulfides stabilise this stretch: Cys411-Cys441 and Cys423-Cys458.

Belongs to the peptidase C13 family. In terms of assembly, homodimer.

It catalyses the reaction Hydrolysis of proteins and small molecule substrates at -Asn-|-Xaa- bonds.. Its activity is regulated as follows. Repressed by various protease inhibitors including p-chloromercuribenzene sulfonic acid (PCMBS), N-ethylmaleimide, kininogen, elastatinal, cystatin EW and leupeptin. Functionally, asparaginyl endopeptidase able to cleave almost all peptide bonds on the carboxyl side of Asn residues, except at the NH2 terminus or second position or with N-glycosylated Asn. Responsible for the maturation (circular permutation) of concanavalin A from its precursor, by performing both cleavage and cleavage-coupled transpeptidation to form conA. The sequence is that of Legumain from Canavalia ensiformis (Jack bean).